The following is a 2410-amino-acid chain: Genome polyprotein 1 (2410 aa).

Residues 1–22 (MEQTLAQAVSRKSKTDTPMAEE) form a disordered region. The 159-residue stretch at 474–632 (KMADANNCWS…AARKYPLHVE (159 aa)) folds into the Helicase ATP-binding domain. An ATP-binding site is contributed by 487 to 494 (GHTGSGKS). Residues 647–813 (GGGDLLDISK…NVPFYMNETF (167 aa)) form the Helicase C-terminal domain. At tyrosine 1234 the chain carries O-(5'-phospho-RNA)-tyrosine. Residues 1359-1573 (ITLEASTGIL…CGYASHTALF (215 aa)) enclose the Peptidase C4 domain. Residues histidine 1404, aspartate 1440, and cysteine 1507 each act as for nuclear inclusion protein A activity in the active site. The 124-residue stretch at 1857-1980 (WLHGSGDGSR…AISPQFDEEF (124 aa)) folds into the RdRp catalytic domain. A disordered region spans residues 2173–2200 (TRTPTEDDGKLKTPSGARIPSSAADGNW).

It belongs to the bymoviruses polyprotein 1 family. Post-translationally, VPg is uridylylated by the polymerase and is covalently attached to the 5'-end of the genomic RNA. This uridylylated form acts as a nucleotide-peptide primer for the polymerase. The viral RNA1 of bymoviruses is expressed as a single polyprotein which undergoes post-translational proteolytic processing by the main proteinase NIa-pro resulting in the production of at least eight individual proteins.

The protein resides in the host cytoplasmic vesicle. It localises to the virion. It catalyses the reaction RNA(n) + a ribonucleoside 5'-triphosphate = RNA(n+1) + diphosphate. The catalysed reaction is Hydrolyzes glutaminyl bonds, and activity is further restricted by preferences for the amino acids in P6 - P1' that vary with the species of potyvirus, e.g. Glu-Xaa-Xaa-Tyr-Xaa-Gln-|-(Ser or Gly) for the enzyme from tobacco etch virus. The natural substrate is the viral polyprotein, but other proteins and oligopeptides containing the appropriate consensus sequence are also cleaved.. Functionally, indispensable for virus replication. Mediates the cap-independent, EIF4E-dependent translation of viral genomic RNAs. Binds to the cap-binding site of host EIF4E and thus interferes with the host EIF4E-dependent mRNA export and translation. VPg-RNA directly binds EIF4E and is a template for transcription. Also forms trimeric complexes with EIF4E-EIF4G, which are templates for translation. Its function is as follows. Has RNA-binding and proteolytic activities. In terms of biological role, an RNA-dependent RNA polymerase that plays an essential role in the virus replication. The chain is Genome polyprotein 1 from Hordeum vulgare (Barley).